Consider the following 227-residue polypeptide: uncharacterized protein (227 aa).

Residues 1–23 form the signal peptide; sequence MKKRFSLIMMTGLLFGLTSPAFA. Residues 36–227 form the VWFA domain; it reads NVAVLLDASG…FTQQSLMLSK (192 aa).

This sequence to B.subtilis YwmD.

This is an uncharacterized protein from Bacillus subtilis (strain 168).